The following is a 498-amino-acid chain: Beta-1,3-glucosyltransferase (498 aa).

At Met1–Cys6 the chain is on the cytoplasmic side. Residues Trp7–Leu27 form a helical; Signal-anchor for type II membrane protein membrane-spanning segment. Residues Ala28–Leu498 lie on the Lumenal side of the membrane. N-linked (GlcNAc...) asparagine glycosylation occurs at Asn336. The Prevents secretion from ER motif lies at Arg495–Leu498.

It belongs to the glycosyltransferase 31 family. As to expression, widely expressed, with highest levels in testis and uterus.

It localises to the endoplasmic reticulum membrane. It participates in protein modification; protein glycosylation. In terms of biological role, O-glucosyltransferase that transfers glucose toward fucose with a beta-1,3 linkage. Specifically glucosylates O-linked fucosylglycan on TSP type-1 domains of proteins, thereby contributing to elongation of O-fucosylglycan. The polypeptide is Beta-1,3-glucosyltransferase (Homo sapiens (Human)).